The following is a 316-amino-acid chain: Peroxidase 67 (316 aa).

The first 19 residues, 1-19, serve as a signal peptide directing secretion; it reads MLKVVLLMMIMMLASQSEA. Q20 carries the post-translational modification Pyrrolidone carboxylic acid. 4 disulfides stabilise this stretch: C30–C110, C63–C68, C116–C312, and C196–C221. The Proton acceptor role is filled by H61. 5 residues coordinate Ca(2+): D62, V65, G67, D69, and S71. P159 serves as a coordination point for substrate. Residue H189 coordinates heme b. Residue T190 participates in Ca(2+) binding. N-linked (GlcNAc...) asparagine glycosylation is present at N205. Residues D236, S239, and D244 each coordinate Ca(2+).

The protein belongs to the peroxidase family. Classical plant (class III) peroxidase subfamily. Heme b is required as a cofactor. Requires Ca(2+) as cofactor.

It is found in the secreted. It catalyses the reaction 2 a phenolic donor + H2O2 = 2 a phenolic radical donor + 2 H2O. In terms of biological role, removal of H(2)O(2), oxidation of toxic reductants, biosynthesis and degradation of lignin, suberization, auxin catabolism, response to environmental stresses such as wounding, pathogen attack and oxidative stress. These functions might be dependent on each isozyme/isoform in each plant tissue. The protein is Peroxidase 67 (PER67) of Arabidopsis thaliana (Mouse-ear cress).